The primary structure comprises 475 residues: Aspartyl/glutamyl-tRNA(Asn/Gln) amidotransferase subunit B (475 aa).

It belongs to the GatB/GatE family. GatB subfamily. In terms of assembly, heterotrimer of A, B and C subunits.

It catalyses the reaction L-glutamyl-tRNA(Gln) + L-glutamine + ATP + H2O = L-glutaminyl-tRNA(Gln) + L-glutamate + ADP + phosphate + H(+). The enzyme catalyses L-aspartyl-tRNA(Asn) + L-glutamine + ATP + H2O = L-asparaginyl-tRNA(Asn) + L-glutamate + ADP + phosphate + 2 H(+). Allows the formation of correctly charged Asn-tRNA(Asn) or Gln-tRNA(Gln) through the transamidation of misacylated Asp-tRNA(Asn) or Glu-tRNA(Gln) in organisms which lack either or both of asparaginyl-tRNA or glutaminyl-tRNA synthetases. The reaction takes place in the presence of glutamine and ATP through an activated phospho-Asp-tRNA(Asn) or phospho-Glu-tRNA(Gln). This Chlorobium limicola (strain DSM 245 / NBRC 103803 / 6330) protein is Aspartyl/glutamyl-tRNA(Asn/Gln) amidotransferase subunit B.